The sequence spans 160 residues: MSSIKFQNIIENILKKCQDNRHSQDSVVRAVHSVIHQYNKFEALMPDFSLCVHDRIKFTGEAILLTTEHTTNWGKVVAMLSFSAAVLQTIDEEYKCVATSMLSSYISRSVGANWFIENGGEKSLVEFCNSIMPQNPFNVLNFLVPAVLAGLVLMQTLLIK.

The short motif at 64–84 is the BH1 element; that stretch reads LLTTEHTTNWGKVVAMLSFSA.

The protein belongs to the Bcl-2 family.

In Saimiri sciureus (Common squirrel monkey), this protein is Bcl-2-like gene 16 protein (16).